Consider the following 290-residue polypeptide: Outer dense fiber protein 4 (290 aa).

Position 28 is a phosphoserine (Ser28). The next 4 helical transmembrane spans lie at 44 to 64, 125 to 145, 164 to 184, and 201 to 221; these read AQVVASEFSLVAFLLLLVMVF, PVFGVAKISFTLAIGLGFVLT, LIGIILSFCEVTLIFLTLLLF, and IGWSYFIGWLVLILYFTCGIL. Residues 247 to 290 form a disordered region; it reads GPESLVSPSQTPSSQENSQESPKDDQKPSSPDKVVSPPQPDTTG. Over residues 252 to 266 the composition is skewed to polar residues; sequence VSPSQTPSSQENSQE.

Expressed in testis.

The protein resides in the membrane. Functionally, component of the outer dense fibers (ODF) of spermatozoa which could be involved in sperm tail structure, sperm movement and general organization of cellular cytoskeleton. This chain is Outer dense fiber protein 4 (Odf4), found in Mus musculus (Mouse).